Reading from the N-terminus, the 375-residue chain is Arsenite methyltransferase (375 aa).

Serine 335 carries the phosphoserine modification.

It belongs to the methyltransferase superfamily. Arsenite methyltransferase family.

The protein resides in the cytoplasm. It is found in the cytosol. The catalysed reaction is arsenic triglutathione + [thioredoxin]-dithiol + S-adenosyl-L-methionine + 2 H2O = methylarsonous acid + [thioredoxin]-disulfide + 3 glutathione + S-adenosyl-L-homocysteine + H(+). It catalyses the reaction arsenic triglutathione + 2 [thioredoxin]-dithiol + 2 S-adenosyl-L-methionine + H2O = dimethylarsinous acid + 2 [thioredoxin]-disulfide + 3 glutathione + 2 S-adenosyl-L-homocysteine + 2 H(+). The enzyme catalyses arsenic triglutathione + 3 [thioredoxin]-dithiol + 3 S-adenosyl-L-methionine = trimethylarsine + 3 [thioredoxin]-disulfide + 3 glutathione + 3 S-adenosyl-L-homocysteine + 3 H(+). Functionally, catalyzes the transfer of a methyl group from AdoMet to trivalent arsenicals producing methylated and dimethylated arsenicals. It methylates arsenite to form methylarsonate, Me-AsO(3)H(2), which is reduced by methylarsonate reductase to methylarsonite, Me-As(OH)2. Methylarsonite is also a substrate and it is converted into the much less toxic compound dimethylarsinate (cacodylate), Me(2)As(O)-OH. The polypeptide is Arsenite methyltransferase (AS3MT) (Homo sapiens (Human)).